The following is a 151-amino-acid chain: UPF0756 membrane protein GWCH70_2680 (151 aa).

4 helical membrane passes run 5–25 (ILFL…SLMI), 53–73 (WGVT…EIGF), 86–106 (WIAL…VTLL), and 116–136 (LVFG…GPLI).

It belongs to the UPF0756 family.

The protein localises to the cell membrane. In Geobacillus sp. (strain WCH70), this protein is UPF0756 membrane protein GWCH70_2680.